A 158-amino-acid polypeptide reads, in one-letter code: MMKCLLIATGQHVPTWVAQGFAEYHRRLSYWLPLELVEIEPSMRGKNHDPQRAIEDEGRRVMAALPKQPYAVTLDVKGKPLNSEQLAQRMEHWRGLGRNLVFLIGGPEGHSQEVLNISNERWSLGPLTLPHMLVRLIVVEQLYRAATILTNHPYHRGK.

Residues leucine 74, glycine 105, and leucine 124–leucine 129 contribute to the S-adenosyl-L-methionine site.

Belongs to the RNA methyltransferase RlmH family. In terms of assembly, homodimer.

It is found in the cytoplasm. It carries out the reaction pseudouridine(1915) in 23S rRNA + S-adenosyl-L-methionine = N(3)-methylpseudouridine(1915) in 23S rRNA + S-adenosyl-L-homocysteine + H(+). Specifically methylates the pseudouridine at position 1915 (m3Psi1915) in 23S rRNA. The sequence is that of Ribosomal RNA large subunit methyltransferase H from Xylella fastidiosa (strain Temecula1 / ATCC 700964).